We begin with the raw amino-acid sequence, 200 residues long: Non-specific lipid transfer protein GPI-anchored 16 (200 aa).

An N-terminal signal peptide occupies residues 1 to 20 (MEGLTLIVVMMSSFMLGGQG). 4 disulfides stabilise this stretch: Cys27–Cys72, Cys38–Cys56, Cys57–Cys98, and Cys70–Cys107. Residue Asn87 is glycosylated (N-linked (GlcNAc...) asparagine). Residues 134-182 (SPGASKAAGTTPTQAPAPDTPADGPTGPTTKSGIRPVDQPMQPTGLAQS) form a disordered region. The segment covering 140-163 (AAGTTPTQAPAPDTPADGPTGPTT) has biased composition (low complexity). Residue Thr177 is the site of GPI-anchor amidated threonine attachment. A propeptide spans 178-200 (GLAQSSTSPFLPLLFISLILLNL) (removed in mature form).

It belongs to the plant LTP family. Expressed in seedlings, preferentially in hypocotyls and roots. Also observed in siliques.

The protein localises to the cell membrane. Its function is as follows. Essential protein involved in female gametophyte development. Probable lipid transfer protein. The sequence is that of Non-specific lipid transfer protein GPI-anchored 16 from Arabidopsis thaliana (Mouse-ear cress).